The sequence spans 992 residues: Meckelin (992 aa).

A signal peptide spans 1–36; that stretch reads MVTRTRPVAAMAVRSRSSSRTGTAYLLLVLCEVSWA. The tract at residues 37 to 280 is cysteine-rich; it reads QIFSFPFRRP…FHYIFESTAG (244 aa). At 37 to 516 the chain is on the extracellular side; that stretch reads QIFSFPFRRP…SVKYEMNQGD (480 aa). 12 disulfide bridges follow: Cys49–Cys62, Cys65–Cys78, Cys80–Cys97, Cys100–Cys114, Cys117–Cys127, Cys129–Cys150, Cys153–Cys170, Cys173–Cys184, Cys186–Cys197, Cys237–Cys246, Cys253–Cys268, and Cys354–Cys375. Residue Asn242 is glycosylated (N-linked (GlcNAc...) asparagine). Residues 517–545 form a helical membrane-spanning segment; the sequence is ASVHTDIALGVLGGLAVLSSLLKTAGWKR. Residues 546-555 are Cytoplasmic-facing; sequence RVGSPMIDLQ. The helical transmembrane segment at 556-587 threads the bilayer; it reads TVMKFLLYYAGDLANVFFIITVGTGLYWLIFF. At 588–600 the chain is on the extracellular side; it reads KAQKSVSVLLPMP. The helical transmembrane segment at 601-628 threads the bilayer; that stretch reads VQEERFVTYVGCAFAMKALQFLHKFISQ. Residues 629–667 lie on the Cytoplasmic side of the membrane; the sequence is ISIDIFFIDWERPKGKVLKAVEGEGGVRSATVPVSIWRT. An intramembrane region (helical) is located at residues 668 to 676; sequence YFVANEWNE. A discontinuously helical transmembrane segment spans residues 668–698; the sequence is YFVANEWNEIQTVRKINPLFQVLTTLFFLEV. An intramembrane segment occupies 677–685; the sequence is IQTVRKINP. The helical intramembrane region spans 686 to 698; it reads LFQVLTTLFFLEV. At 699-728 the chain is on the extracellular side; sequence VGFKNLALMDSSSSLSRNPSDYTAPYSRIL. The segment at residues 729 to 754 is an intramembrane region (helical); it reads RYAVATAIWLVIGIIQVVFFAAFYER. A discontinuously helical membrane pass occupies residues 729-768; sequence RYAVATAIWLVIGIIQVVFFAAFYERFIEDKIRQFVDLCS. An intramembrane segment occupies 755–759; that stretch reads FIEDK. The segment at residues 760 to 768 is an intramembrane region (helical); that stretch reads IRQFVDLCS. Residues 769–923 lie on the Cytoplasmic side of the membrane; that stretch reads MSNVSVFLLS…SIFYNDEGHS (155 aa). The helical intramembrane region spans 924–926; that stretch reads FSS. The discontinuously helical transmembrane segment at 924-949 threads the bilayer; that stretch reads FSSVLYYGNEATLLIFDLLFFCVVDL. The stretch at 927-933 is an intramembrane region; the sequence is VLYYGNE. An intramembrane region (helical) is located at residues 934–949; it reads ATLLIFDLLFFCVVDL. Residues 950-954 are Extracellular-facing; sequence ACQDF. The chain crosses the membrane as a helical span at residues 955–982; the sequence is VLASFLTYLQQEIFRFIRNTVGQKNLAT. The Cytoplasmic portion of the chain corresponds to 983–992; that stretch reads KTLVDERFLI.

Homodimer. Part of the tectonic-like complex (also named B9 complex). Interacts with DNAJB9, DNAJC10 and mutated SFTPC. Interacts with SYNE2 during the early establishment of cell polarity. Interacts (via C-terminus) with FLNA. Interacts with TMEM218. Interacts with WNT5A. Interacts with ROR2.

The protein localises to the cell membrane. Its subcellular location is the endoplasmic reticulum membrane. The protein resides in the cytoplasm. It is found in the cytoskeleton. It localises to the cilium basal body. In terms of biological role, part of the tectonic-like complex which is required for tissue-specific ciliogenesis and may regulate ciliary membrane composition. Involved in centrosome migration to the apical cell surface during early ciliogenesis. Required for ciliary structure and function, including a role in regulating length and appropriate number through modulating centrosome duplication. Is a key regulator of stereociliary bundle orientation. Required for epithelial cell branching morphology. Essential for endoplasmic reticulum-associated degradation (ERAD) of surfactant protein C (sftpc). Involved in the negative regulation of canonical Wnt signaling, and activation of the non-canonical cascade stimulated by WNT5A. In non-canonical Wnt signaling, it may act as ROR2 coreceptor. The protein is Meckelin (Tmem67) of Mus musculus (Mouse).